A 246-amino-acid chain; its full sequence is Carboxy-S-adenosyl-L-methionine synthase (246 aa).

S-adenosyl-L-methionine contacts are provided by residues tyrosine 39, 64-66, 89-90, 117-118, asparagine 132, and arginine 199; these read GCS, DN, and DI.

This sequence belongs to the class I-like SAM-binding methyltransferase superfamily. Cx-SAM synthase family. As to quaternary structure, homodimer.

The catalysed reaction is prephenate + S-adenosyl-L-methionine = carboxy-S-adenosyl-L-methionine + 3-phenylpyruvate + H2O. Functionally, catalyzes the conversion of S-adenosyl-L-methionine (SAM) to carboxy-S-adenosyl-L-methionine (Cx-SAM). The polypeptide is Carboxy-S-adenosyl-L-methionine synthase (Erwinia tasmaniensis (strain DSM 17950 / CFBP 7177 / CIP 109463 / NCPPB 4357 / Et1/99)).